Here is a 410-residue protein sequence, read N- to C-terminus: Acetate kinase (410 aa).

Position 7 (asparagine 7) interacts with Mg(2+). ATP is bound at residue lysine 14. Substrate is bound at residue arginine 98. Residue aspartate 155 is the Proton donor/acceptor of the active site. ATP is bound by residues histidine 215–glycine 219, aspartate 290–arginine 292, and glycine 338–asparagine 342. Glutamate 392 is a Mg(2+) binding site.

Belongs to the acetokinase family. As to quaternary structure, homodimer. Requires Mg(2+) as cofactor. It depends on Mn(2+) as a cofactor.

The protein resides in the cytoplasm. It carries out the reaction acetate + ATP = acetyl phosphate + ADP. It functions in the pathway metabolic intermediate biosynthesis; acetyl-CoA biosynthesis; acetyl-CoA from acetate: step 1/2. Functionally, catalyzes the formation of acetyl phosphate from acetate and ATP. Can also catalyze the reverse reaction. The sequence is that of Acetate kinase from Kocuria rhizophila (strain ATCC 9341 / DSM 348 / NBRC 103217 / DC2201).